We begin with the raw amino-acid sequence, 426 residues long: Enolase (426 aa).

Gln163 contacts (2R)-2-phosphoglycerate. Residue Glu205 is the Proton donor of the active site. The Mg(2+) site is built by Asp242, Glu283, and Asp310. (2R)-2-phosphoglycerate contacts are provided by Lys335, Arg364, Ser365, and Lys386. The active-site Proton acceptor is Lys335.

Belongs to the enolase family. It depends on Mg(2+) as a cofactor.

It localises to the cytoplasm. It is found in the secreted. The protein resides in the cell surface. It catalyses the reaction (2R)-2-phosphoglycerate = phosphoenolpyruvate + H2O. It participates in carbohydrate degradation; glycolysis; pyruvate from D-glyceraldehyde 3-phosphate: step 4/5. Catalyzes the reversible conversion of 2-phosphoglycerate (2-PG) into phosphoenolpyruvate (PEP). It is essential for the degradation of carbohydrates via glycolysis. In Leifsonia xyli subsp. xyli (strain CTCB07), this protein is Enolase.